The sequence spans 626 residues: Endoglucanase 19 (626 aa).

Positions 1–23 (MGSRTTISILVVLLLGLVQLAIS) are cleaved as a signal peptide. The active-site Nucleophile is the D79. Active-site residues include H412, D464, and E473. The disordered stretch occupies residues 515 to 536 (APVPQRKPTKPPAASSPSPITI). Positions 526 to 536 (PAASSPSPITI) are enriched in low complexity. N-linked (GlcNAc...) asparagine glycosylation is found at N560 and N622.

Belongs to the glycosyl hydrolase 9 (cellulase E) family.

It localises to the secreted. The enzyme catalyses Endohydrolysis of (1-&gt;4)-beta-D-glucosidic linkages in cellulose, lichenin and cereal beta-D-glucans.. The chain is Endoglucanase 19 from Arabidopsis thaliana (Mouse-ear cress).